A 261-amino-acid chain; its full sequence is TM2 domain-containing protein 3 (261 aa).

An N-terminal signal peptide occupies residues 1 to 44 (MEAAAEPLRSVRHLSRVLLFLSQCYILSGDGSLNLEHSQPLAQA). Residues 45 to 193 (IKDPGPTRTF…RTFPKLLYCN (149 aa)) are Extracellular-facing. N101, N136, N154, N171, N183, and N193 each carry an N-linked (GlcNAc...) asparagine glycan. The chain crosses the membrane as a helical span at residues 194-214 (WTGGYKWSTALALSITLGGFG). Residues 197 to 244 (GYKWSTALALSITLGGFGADRFYLGQWREGLGKLFSFGGLGIWTLIDV) form the TM2 domain. Topologically, residues 215–229 (ADRFYLGQWREGLGK) are cytoplasmic. A helical transmembrane segment spans residues 230–250 (LFSFGGLGIWTLIDVLLIGVG). Topologically, residues 251 to 261 (YVGPADGSLYI) are extracellular.

Belongs to the TM2 family.

It is found in the membrane. The sequence is that of TM2 domain-containing protein 3 (Tm2d3) from Mus musculus (Mouse).